The following is a 226-amino-acid chain: ATP synthase F(0) complex subunit a (226 aa).

The next 6 membrane-spanning stretches (helical) occupy residues 12–32, 68–88, 97–117, 138–158, 164–184, and 200–222; these read PTIL…LLIP, WSLM…LGLL, QLSM…ATGF, IPML…ALAV, ITAG…LSTI, and TTLE…SLYL.

Belongs to the ATPase A chain family. Component of the ATP synthase complex composed at least of ATP5F1A/subunit alpha, ATP5F1B/subunit beta, ATP5MC1/subunit c (homooctomer), MT-ATP6/subunit a, MT-ATP8/subunit 8, ATP5ME/subunit e, ATP5MF/subunit f, ATP5MG/subunit g, ATP5MK/subunit k, ATP5MJ/subunit j, ATP5F1C/subunit gamma, ATP5F1D/subunit delta, ATP5F1E/subunit epsilon, ATP5PF/subunit F6, ATP5PB/subunit b, ATP5PD/subunit d, ATP5PO/subunit OSCP. ATP synthase complex consists of a soluble F(1) head domain (subunits alpha(3) and beta(3)) - the catalytic core - and a membrane F(0) domain - the membrane proton channel (subunits c, a, 8, e, f, g, k and j). These two domains are linked by a central stalk (subunits gamma, delta, and epsilon) rotating inside the F1 region and a stationary peripheral stalk (subunits F6, b, d, and OSCP). Interacts with DNAJC30; interaction is direct.

It is found in the mitochondrion inner membrane. The catalysed reaction is H(+)(in) = H(+)(out). Subunit a, of the mitochondrial membrane ATP synthase complex (F(1)F(0) ATP synthase or Complex V) that produces ATP from ADP in the presence of a proton gradient across the membrane which is generated by electron transport complexes of the respiratory chain. ATP synthase complex consist of a soluble F(1) head domain - the catalytic core - and a membrane F(1) domain - the membrane proton channel. These two domains are linked by a central stalk rotating inside the F(1) region and a stationary peripheral stalk. During catalysis, ATP synthesis in the catalytic domain of F(1) is coupled via a rotary mechanism of the central stalk subunits to proton translocation. With the subunit c (ATP5MC1), forms the proton-conducting channel in the F(0) domain, that contains two crucial half-channels (inlet and outlet) that facilitate proton movement from the mitochondrial intermembrane space (IMS) into the matrix. Protons are taken up via the inlet half-channel and released through the outlet half-channel, following a Grotthuss mechanism. The protein is ATP synthase F(0) complex subunit a of Hylobates lar (Lar gibbon).